We begin with the raw amino-acid sequence, 368 residues long: MSAFKPTIKRRESTKIYVGNVPVGGDAPIAVQSMTNTRTTDVEATVAQIKALERVGADIIRVSVPTMEAAEAFKLIKRQSSVPLVADIHFDYRIALKVAEYGVDCLRINPGNIGREDRIRAVVDCAKDKNIPIRIGINAGSLEKDIQEKYGEPTPEALLESALRHVEILDRLNFDQFKVSVKASDVFLAVEAYRLLAKAIKQPLHLGITEAGGARAGAVKSAVGLGMLLAEGIGDTLRVSLAADPVEEIKVGFDILKSLRIRSRGINFIACPTCSRQEFDVIGTVNALEQRLEDIITPMDVSIIGCVVNGPGEALVSDLGVTGGNKKSGFYLNGERQKERFDNEYIVDQLEAKIRAKIAAQDPKNRIL.

4 residues coordinate [4Fe-4S] cluster: cysteine 271, cysteine 274, cysteine 306, and glutamate 313.

This sequence belongs to the IspG family. The cofactor is [4Fe-4S] cluster.

It carries out the reaction (2E)-4-hydroxy-3-methylbut-2-enyl diphosphate + oxidized [flavodoxin] + H2O + 2 H(+) = 2-C-methyl-D-erythritol 2,4-cyclic diphosphate + reduced [flavodoxin]. The protein operates within isoprenoid biosynthesis; isopentenyl diphosphate biosynthesis via DXP pathway; isopentenyl diphosphate from 1-deoxy-D-xylulose 5-phosphate: step 5/6. In terms of biological role, converts 2C-methyl-D-erythritol 2,4-cyclodiphosphate (ME-2,4cPP) into 1-hydroxy-2-methyl-2-(E)-butenyl 4-diphosphate. The protein is 4-hydroxy-3-methylbut-2-en-1-yl diphosphate synthase (flavodoxin) of Mannheimia succiniciproducens (strain KCTC 0769BP / MBEL55E).